A 328-amino-acid polypeptide reads, in one-letter code: Formimidoylglutamase (328 aa).

Mn(2+)-binding residues include H133, D159, H161, D163, D253, and D255.

Belongs to the arginase family. It depends on Mn(2+) as a cofactor.

The enzyme catalyses N-formimidoyl-L-glutamate + H2O = formamide + L-glutamate. Its pathway is amino-acid degradation; L-histidine degradation into L-glutamate; L-glutamate from N-formimidoyl-L-glutamate (hydrolase route): step 1/1. In terms of biological role, catalyzes the conversion of N-formimidoyl-L-glutamate to L-glutamate and formamide. The sequence is that of Formimidoylglutamase from Streptococcus pyogenes serotype M1.